The primary structure comprises 315 residues: Calumenin (315 aa).

An N-terminal signal peptide occupies residues 1 to 19; that stretch reads MDLRQFLMCLSLCTAFALS. At Ser-44 the chain carries Phosphoserine. Residue Tyr-47 is modified to Phosphotyrosine. The residue at position 65 (Thr-65) is a Phosphothreonine. EF-hand domains lie at 68-103, 104-139, 151-186, 188-223, 229-264, and 265-300; these read ESKE…AQKR, WIYE…YVLD, QMMV…EEYD, MKDI…HDGN, WVKT…SDYD, and HAEA…FVGS. Ser-69 is modified (phosphoserine; by FAM20C). Residues Asp-81, Asp-83, Asp-85, Glu-92, Asp-117, Asn-119, Asp-121, and Glu-128 each coordinate Ca(2+). Asn-131 carries N-linked (GlcNAc...) (complex) asparagine glycosylation. Asp-164 serves as a coordination point for Ca(2+). The residue at position 165 (Lys-165) is an N6-acetyllysine. Residues Asp-166, Asp-168, Glu-175, Asp-201, Asn-203, Asp-205, Glu-212, Asp-242, Asn-244, Asp-246, Lys-248, and Glu-253 each coordinate Ca(2+). A Phosphothreonine modification is found at Thr-254. Phosphoserine occurs at positions 261 and 277. Residues Asp-278, Asn-280, Asp-282, Lys-284, and Glu-289 each coordinate Ca(2+). Residues 312-315 carry the Prevents secretion from ER motif; it reads HDEF.

Belongs to the CREC family. In terms of assembly, interacts with GGCX. In terms of tissue distribution, ubiquitously expressed. Expressed at high levels in heart, placenta and skeletal muscle, at lower levels in lung, kidney and pancreas and at very low levels in brain and liver.

The protein resides in the endoplasmic reticulum membrane. It localises to the golgi apparatus. Its subcellular location is the secreted. It is found in the melanosome. The protein localises to the sarcoplasmic reticulum lumen. Involved in regulation of vitamin K-dependent carboxylation of multiple N-terminal glutamate residues. Seems to inhibit gamma-carboxylase GGCX. Binds 7 calcium ions with a low affinity. The polypeptide is Calumenin (CALU) (Homo sapiens (Human)).